The chain runs to 168 residues: MPSLSITRQGWIAYAIAAVTVVLDQISKLWILGLLGREPGASLPLLGPIHLTMVHNYGMSFGLLRDSDWGRWLLIGFSILVVIGLAVWVHKATRPLLAVGIGLIIGGAIGNNLIDRVIYGYVVDFIDVSRLYFPWVFNIADSGISVGVALLLLDSFLSEENKLSHQTE.

Helical transmembrane passes span 15–35 (AIAAVTVVLDQISKLWILGLL), 69–89 (WGRWLLIGFSILVVIGLAVWV), and 95–115 (PLLAVGIGLIIGGAIGNNLID). Residues Asp124 and Asp141 contribute to the active site. The helical transmembrane segment at 133–153 (FPWVFNIADSGISVGVALLLL) threads the bilayer.

Belongs to the peptidase A8 family.

Its subcellular location is the cell inner membrane. It carries out the reaction Release of signal peptides from bacterial membrane prolipoproteins. Hydrolyzes -Xaa-Yaa-Zaa-|-(S,diacylglyceryl)Cys-, in which Xaa is hydrophobic (preferably Leu), and Yaa (Ala or Ser) and Zaa (Gly or Ala) have small, neutral side chains.. It functions in the pathway protein modification; lipoprotein biosynthesis (signal peptide cleavage). In terms of biological role, this protein specifically catalyzes the removal of signal peptides from prolipoproteins. In Caulobacter vibrioides (strain ATCC 19089 / CIP 103742 / CB 15) (Caulobacter crescentus), this protein is Lipoprotein signal peptidase.